Consider the following 243-residue polypeptide: Polycomb group RING finger protein 1 (243 aa).

Lys-12 participates in a covalent cross-link: Glycyl lysine isopeptide (Lys-Gly) (interchain with G-Cter in SUMO2). The RING-type zinc-finger motif lies at 35–74 (CCLCAGYFVDATTITECLHTFCKSCIVKYLQTSKYCPMCN). Residues 74–231 (NIKIHETQPL…LSRWFGKPSP (158 aa)) form a necessary for repressor activity region. Residue Lys-76 forms a Glycyl lysine isopeptide (Lys-Gly) (interchain with G-Cter in SUMO2) linkage. The tract at residues 138–239 (LPFTSFDHYY…SPLLLQYSVK (102 aa)) is required for the interaction with the KDM2B-SKP1 heterodimeric complex. The segment at 151 to 239 (EQLSLCLERL…SPLLLQYSVK (89 aa)) is RING-finger and WD40-associated ubiquitin-like domain (RAWUL); sufficient for interaction with BCOR and BCORL1.

As to quaternary structure, interacts with BCORL1, forming heterodimers. The PCGF1-BCORL1 heterodimeric complex interacts with the KDM2B-SKP1 heterodimeric complex to form a homotetrameric polycomb repression complex 1 (PRC1.1). Component of the repressive BCOR complex containing a Polycomb group subcomplex at least composed of RYBP, RING1 and RNF2/RING2. Specifically interacts with BCOR, RING1 and RNF2/RING2. Component of a PRC1-like complex. Interacts with CBX6, CBX7 and CBX8. Interacts with DPPA4, NANOG, POU5F1 and RYBP. In terms of tissue distribution, highly expressed in brain, cerebellum, heart and testis.

It is found in the nucleus. Its function is as follows. Component of the Polycomb group (PcG) multiprotein BCOR complex, a complex required to maintain the transcriptionally repressive state of some genes, such as BCL6 and the cyclin-dependent kinase inhibitor, CDKN1A. Transcriptional repressor that may be targeted to the DNA by BCL6; this transcription repressor activity may be related to PKC signaling pathway. Represses CDKN1A expression by binding to its promoter, and this repression is dependent on the retinoic acid response element (RARE element). Promotes cell cycle progression and enhances cell proliferation as well. May have a positive role in tumor cell growth by down-regulating CDKN1A. Component of a Polycomb group (PcG) multiprotein PRC1-like complex, a complex class required to maintain the transcriptionally repressive state of many genes, including Hox genes, throughout development. PcG PRC1 complex acts via chromatin remodeling and modification of histones; it mediates monoubiquitination of histone H2A 'Lys-119', rendering chromatin heritably changed in its expressibility. Within the PRC1-like complex, regulates RNF2 ubiquitin ligase activity. Regulates the expression of DPPA4 and NANOG in the NT2 embryonic carcinoma cells. The sequence is that of Polycomb group RING finger protein 1 (Pcgf1) from Rattus norvegicus (Rat).